The chain runs to 428 residues: Serine--tRNA ligase (428 aa).

L-serine is bound at residue 237–239 (TAE). An ATP-binding site is contributed by 268–270 (RSE). E291 serves as a coordination point for L-serine. 355-358 (EISS) contributes to the ATP binding site. S390 is an L-serine binding site.

This sequence belongs to the class-II aminoacyl-tRNA synthetase family. Type-1 seryl-tRNA synthetase subfamily. In terms of assembly, homodimer. The tRNA molecule binds across the dimer.

It localises to the cytoplasm. It carries out the reaction tRNA(Ser) + L-serine + ATP = L-seryl-tRNA(Ser) + AMP + diphosphate + H(+). It catalyses the reaction tRNA(Sec) + L-serine + ATP = L-seryl-tRNA(Sec) + AMP + diphosphate + H(+). Its pathway is aminoacyl-tRNA biosynthesis; selenocysteinyl-tRNA(Sec) biosynthesis; L-seryl-tRNA(Sec) from L-serine and tRNA(Sec): step 1/1. Catalyzes the attachment of serine to tRNA(Ser). Is also able to aminoacylate tRNA(Sec) with serine, to form the misacylated tRNA L-seryl-tRNA(Sec), which will be further converted into selenocysteinyl-tRNA(Sec). This is Serine--tRNA ligase from Hydrogenovibrio crunogenus (strain DSM 25203 / XCL-2) (Thiomicrospira crunogena).